Here is a 399-residue protein sequence, read N- to C-terminus: Acetate kinase (399 aa).

Asn-7 serves as a coordination point for Mg(2+). Residue Lys-14 coordinates ATP. Arg-90 contacts substrate. Asp-147 functions as the Proton donor/acceptor in the catalytic mechanism. Residues His-207–Gly-211, Asp-282–Arg-284, and Gly-330–Asn-334 each bind ATP. Glu-385 provides a ligand contact to Mg(2+).

This sequence belongs to the acetokinase family. Homodimer. Requires Mg(2+) as cofactor. Mn(2+) serves as cofactor.

It is found in the cytoplasm. The catalysed reaction is acetate + ATP = acetyl phosphate + ADP. The protein operates within metabolic intermediate biosynthesis; acetyl-CoA biosynthesis; acetyl-CoA from acetate: step 1/2. Functionally, catalyzes the formation of acetyl phosphate from acetate and ATP. Can also catalyze the reverse reaction. This Caldicellulosiruptor saccharolyticus (strain ATCC 43494 / DSM 8903 / Tp8T 6331) protein is Acetate kinase.